We begin with the raw amino-acid sequence, 478 residues long: Serralysin C (478 aa).

Residues 1–17 (MEKNLSSRDDDALHSLS) constitute a propeptide that is removed on maturation. H187 provides a ligand contact to Zn(2+). The active site involves E188. Zn(2+) is bound by residues H191 and Y227. Ca(2+) is bound by residues R264, G266, D296, G298, G299, D301, T338, E340, G345, G347, D349, N354, A356, N358, G362, G363, A364, G365, D367, G371, G372, G374, D376, G380, G381, G383, D385, D394, D401, and D411. Hemolysin-type calcium-binding repeat units follow at residues 343–360 (IGGS…DNTL) and 361–378 (RGGA…ADRL).

This sequence belongs to the peptidase M10B family. Ca(2+) is required as a cofactor. Requires Zn(2+) as cofactor.

Its subcellular location is the secreted. The catalysed reaction is Preferential cleavage of bonds with hydrophobic residues in P1'.. This is Serralysin C (prtC) from Dickeya chrysanthemi (Pectobacterium chrysanthemi).